Here is a 133-residue protein sequence, read N- to C-terminus: Agouti-signaling protein (133 aa).

Residues methionine 1–serine 22 form the signal peptide. Over residues proline 26 to leucine 36 the composition is skewed to basic and acidic residues. The disordered stretch occupies residues proline 26 to valine 83. Positions arginine 37–valine 50 are enriched in polar residues. 2 N-linked (GlcNAc...) asparagine glycosylation sites follow: asparagine 38 and asparagine 39. Over residues lysine 70–serine 79 the composition is skewed to basic residues. Cystine bridges form between cysteine 94–cysteine 109, cysteine 101–cysteine 115, cysteine 108–cysteine 126, cysteine 112–cysteine 133, and cysteine 117–cysteine 124. The Agouti domain maps to cysteine 94–cysteine 133.

The protein resides in the secreted. Functionally, involved in the regulation of melanogenesis. The binding of ASP to MC1R precludes alpha-MSH initiated signaling and thus blocks production of cAMP, leading to a down-regulation of eumelanogenesis (brown/black pigment) and thus increasing synthesis of pheomelanin (yellow/red pigment). The protein is Agouti-signaling protein (ASIP) of Equus caballus (Horse).